The chain runs to 335 residues: Interleukin-12 subunit beta (335 aa).

The first 22 residues, 1–22 (MCPQKLTISWFAIVLLVSPLMA), serve as a signal peptide directing secretion. An Ig-like C2-type domain is found at 23–106 (MWELEKDVYV…LSHSHLLLHK (84 aa)). N-linked (GlcNAc...) asparagine glycosylation is present at asparagine 47. Cysteine 50 and cysteine 90 are oxidised to a cystine. 3 N-linked (GlcNAc...) asparagine glycosylation sites follow: asparagine 122, asparagine 132, and asparagine 220. The 92-residue stretch at 233–324 (PDPPKNLQMK…QDRYYNSSCS (92 aa)) folds into the Fibronectin type-III domain.

The protein belongs to the IL-12B family. In terms of assembly, heterodimer with IL12A; disulfide-linked. The heterodimer is known as interleukin IL-12. Heterodimer with IL23A; disulfide-linked. The heterodimer is known as interleukin IL-23. Also secreted as a monomer. Interacts with NBR1; this interaction promotes IL-12 secretion.

Its subcellular location is the secreted. In terms of biological role, cytokine that can act as a growth factor for activated T and NK cells, enhance the lytic activity of NK/lymphokine-activated killer cells, and stimulate the production of IFN-gamma by resting PBMC. Associates with IL23A to form the IL-23 interleukin, a heterodimeric cytokine which functions in innate and adaptive immunity. IL-23 may constitute with IL-17 an acute response to infection in peripheral tissues. IL-23 binds to a heterodimeric receptor complex composed of IL12RB1 and IL23R, activates the Jak-Stat signaling cascade, stimulates memory rather than naive T-cells and promotes production of pro-inflammatory cytokines. IL-23 induces autoimmune inflammation and thus may be responsible for autoimmune inflammatory diseases and may be important for tumorigenesis. The chain is Interleukin-12 subunit beta (Il12b) from Mus musculus (Mouse).